Reading from the N-terminus, the 310-residue chain is HTH-type transcriptional activator TtdR (310 aa).

The region spanning 6–63 (PLAKDLQVLVEIVHSGSFSAAAATLGQTPAFVTKRIQILENTLATTLLNRSARGVALT) is the HTH lysR-type domain. A DNA-binding region (H-T-H motif) is located at residues 23-42 (FSAAAATLGQTPAFVTKRIQ).

It belongs to the LysR transcriptional regulatory family.

In terms of biological role, positive regulator required for L-tartrate-dependent anaerobic growth on glycerol. Induces expression of the ttdA-ttdB-ygjE operon. The chain is HTH-type transcriptional activator TtdR (ttdR) from Escherichia coli O6:K15:H31 (strain 536 / UPEC).